Reading from the N-terminus, the 247-residue chain is MSFDTPLKPYLAIPIQDCGEPLAPINLEGVKSLKPHPYAQVGADYQGRSPYVLRTGVLKRLDQARLTLADIEPSWEILVFDAYRPIAVQQFMVDHTFAEIVARDGLQGQVLTPEQKENIYHQVYQIWAVPNNNPLTPPPHSTGAALDITLLDDLGQPVDMGGEIDELSARSLPNYYQTVEPNSDRQRKEFEQYQRRRELLNTIMESAGFLRHPGEWWHFSQGDQLWAWQYNQRHPDHQKIAYYGRVE.

H140 and D147 together coordinate Zn(2+). Residue E215 is the Proton donor/acceptor of the active site. H218 contacts Zn(2+).

It belongs to the peptidase M15D family. Zn(2+) serves as cofactor.

The protein localises to the cytoplasm. The enzyme catalyses D-alanyl-D-alanine + H2O = 2 D-alanine. Its function is as follows. Catalyzes hydrolysis of the D-alanyl-D-alanine dipeptide. May have a role in cell-wall turnover. The polypeptide is D-alanyl-D-alanine dipeptidase (Synechocystis sp. (strain ATCC 27184 / PCC 6803 / Kazusa)).